Consider the following 116-residue polypeptide: Large ribosomal subunit protein bL17 (116 aa).

Belongs to the bacterial ribosomal protein bL17 family. Part of the 50S ribosomal subunit. Contacts protein L32.

In Sulfurovum sp. (strain NBC37-1), this protein is Large ribosomal subunit protein bL17.